The following is a 147-amino-acid chain: Ubiquitin-like-conjugating enzyme ATG10 (147 aa).

C116 acts as the Glycyl thioester intermediate in catalysis.

The protein belongs to the ATG10 family. As to quaternary structure, forms homooligomers. Interacts with ATG10. Interacts with ATG7 and ATG12.

The protein resides in the preautophagosomal structure membrane. Functionally, E2-like enzyme required for the cytoplasm to vacuole transport (Cvt), autophagy and nucleophagy. Acts as an E2-like enzyme that catalyzes the conjugation of ATG12 to ATG5. ATG12 conjugation to ATG5 is required for proper localization of ATG8 to the preautophagosomal structure (PAS). Likely serves as an ATG5-recognition molecule. This Kluyveromyces marxianus (strain DMKU3-1042 / BCC 29191 / NBRC 104275) (Yeast) protein is Ubiquitin-like-conjugating enzyme ATG10.